A 1074-amino-acid chain; its full sequence is MKGTCVIAWLFSSLGLWRLAHPEAQGTTQCQRTEHPVISYKEIGPWLREFRAKNAVDFSQLTFDPGQKELVVGARNYLFRLQLEDLSLIQAVEWECDEATKKACYSKGKSKEECQNYIRVLLVGGDRLFTCGTNAFTPVCTNRSLSNLTEIHDQISGMARCPYSPQHNSTALLTAGGELYAATAMDFPGRDPAIYRSLGILPPLRTAQYNSKWLNEPNFVSSYDIGNFTYFFFRENAVEHDCGKTVFSRAARVCKNDIGGRFLLEDTWTTFMKARLNCSRPGEVPFYYNELQSTFFLPELDLIYGIFTTNVNSIAASAVCVFNLSAIAQAFSGPFKYQENSRSAWLPYPNPNPHFQCGTVDQGLYVNLTERNLQDAQKFILMHEVVQPVTTVPSFMEDNSRFSHVAVDVVQGREALVHIIYLATDYGTIKKVRVPLNQTSSSCLLEEIELFPERRREPIRSLQILHSQSVLFVGLREHVVKIPLKRCQFYRTRSTCIGAQDPYCGWDVVMKKCTSLEESLSMTQWEQSISACPTRNLTVDGHFGVWSPWTPCTHTDGSAVGSCLCRTRSCDSPAPQCGGWQCEGPGMEIANCSRNGGWTPWTSWSPCSTTCGIGFQVRQRSCSNPTPRHGGRVCVGQNREERYCNEHLLCPPHMFWTGWGPWERCTAQCGGGIQARRRICENGPDCAGCNVEYQSCNTNPCPELKKTTPWTPWTPVNISDNGGHYEQRFRYTCKARLADPNLLEVGRQRIEMRYCSSDGTSGCSTDGLSGDFLRAGRYSAHTVNGAWSAWTSWSQCSRDCSRGIRNRKRVCNNPEPKYGGMPCLGPSLEYQECNILPCPVDGVWSCWSPWTKCSATCGGGHYMRTRSCSNPAPAYGGDICLGLHTEEALCNTQPCPESWSEWSDWSECEASGVQVRARQCILLFPMGSQCSGNTTESRPCVFDSNFIPEVSVARSSSVEEKRCGEFNMFHMIAVGLSSSILGCLLTLLVYTYCQRYQQQSHDATVIHPVSPAPLNTSITNHINKLDKYDSVEAIKAFNKNNLILEERNKYFNPHLTGKTYSNAYFTDLNNYDEY.

A signal peptide spans 1-22 (MKGTCVIAWLFSSLGLWRLAHP). Residues 23–968 (EAQGTTQCQR…EEKRCGEFNM (946 aa)) are Extracellular-facing. In terms of domain architecture, Sema spans 35 to 484 (HPVISYKEIG…LREHVVKIPL (450 aa)). 2 disulfides stabilise this stretch: cysteine 104-cysteine 114 and cysteine 131-cysteine 140. N-linked (GlcNAc...) asparagine glycosylation is found at asparagine 142, asparagine 168, asparagine 227, and asparagine 277. 2 disulfides stabilise this stretch: cysteine 254-cysteine 357 and cysteine 278-cysteine 320. Asparagine 323, asparagine 367, and asparagine 437 each carry an N-linked (GlcNAc...) asparagine glycan. 2 disulfides stabilise this stretch: cysteine 487–cysteine 504 and cysteine 496–cysteine 513. N-linked (GlcNAc...) asparagine glycosylation is found at asparagine 536 and asparagine 591. TSP type-1 domains lie at 540-593 (DGHF…ANCS), 595-651 (NGGW…LLCP), 653-702 (HMFW…NPCP), 707-765 (TTPW…GCST), 784-839 (NGAW…LPCP), 841-896 (DGVW…QPCP), and 897-944 (ESWS…VFDS). Disulfide bonds link cysteine 607-cysteine 644, cysteine 611-cysteine 650, cysteine 622-cysteine 634, cysteine 665-cysteine 696, cysteine 669-cysteine 701, and cysteine 680-cysteine 686. Asparagine 717 carries N-linked (GlcNAc...) asparagine glycosylation. Intrachain disulfides connect cysteine 796/cysteine 833, cysteine 800/cysteine 838, cysteine 811/cysteine 823, cysteine 853/cysteine 890, cysteine 857/cysteine 895, and cysteine 868/cysteine 880. Residue asparagine 933 is glycosylated (N-linked (GlcNAc...) asparagine). Residues 969-989 (FHMIAVGLSSSILGCLLTLLV) form a helical membrane-spanning segment. At 990–1074 (YTYCQRYQQQ…FTDLNNYDEY (85 aa)) the chain is on the cytoplasmic side.

This sequence belongs to the semaphorin family. As to quaternary structure, binds PLXNB3.

The protein localises to the membrane. Bifunctional axonal guidance cue regulated by sulfated proteoglycans; attractive effects result from interactions with heparan sulfate proteoglycans (HSPGs), while the inhibitory effects depend on interactions with chondroitin sulfate proteoglycans (CSPGs). Ligand for receptor PLXNB3. In glioma cells, SEMA5A stimulation of PLXNB3 results in the disassembly of F-actin stress fibers, disruption of focal adhesions and cellular collapse as well as inhibition of cell migration and invasion through ARHGDIA-mediated inactivation of RAC1. May promote angiogenesis by increasing endothelial cell proliferation and migration and inhibiting apoptosis. The polypeptide is Semaphorin-5A (SEMA5A) (Homo sapiens (Human)).